A 626-amino-acid polypeptide reads, in one-letter code: Nuclear RNA export factor 1 (626 aa).

A compositionally biased stretch (basic and acidic residues) spans 1–16 (MADEGKSYSEHDDERV). Residues 1–85 (MADEGKSYSE…TTRPNRRGDA (85 aa)) are disordered. N-acetylalanine is present on A2. Residues 2-60 (ADEGKSYSEHDDERVNFPQRKKKGRGPFRWKYGEGNRRSGRGGSGIRSSRLEEDDGDVA) are minor non-specific RNA-binding. Positions 2–118 (ADEGKSYSEH…GTSQDGTSKN (117 aa)) are RNA-binding (RBD). An interaction with ALYREF/THOC4 and LUZP4 region spans residues 2-198 (ADEGKSYSEH…IIINPSAPPH (197 aa)). S9 is subject to Phosphoserine. The span at 20–29 (QRKKKGRGPF) shows a compositional bias: basic residues. At R42 the chain carries Asymmetric dimethylarginine; alternate. The residue at position 42 (R42) is an Omega-N-methylarginine; alternate. The segment at 61–118 (MSDAQDGPRVRYNPYTTRPNRRGDAWHDRDRIHVTVRRDRAPPERGGAGTSQDGTSKN) is major non-specific RNA-binding. The segment at 61-118 (MSDAQDGPRVRYNPYTTRPNRRGDAWHDRDRIHVTVRRDRAPPERGGAGTSQDGTSKN) is RNA binding. Positions 67-100 (GPRVRYNPYTTRPNRRGDAWHDRDRIHVTVRRDR) match the Nuclear localization signal motif. The short motif at 83–110 (GDAWHDRDRIHVTVRRDRAPPERGGAGT) is the Nuclear export signal element. The RRM domain occupies 119–198 (WFKITIPYGR…IIINPSAPPH (80 aa)). Y126 carries the 3'-nitrotyrosine modification. LRR repeat units follow at residues 266-291 (ELLS…QKVP), 292-315 (NLKI…IKGL), 316-350 (KLEE…AIRE), and 351-378 (RFPK…TTLP). Positions 393–543 (LVLHFLQQYY…LCIVNDELFV (151 aa)) constitute an NTF2 domain. The region spanning 572-626 (PEQQEMLQAFSTQSGMNLEWSQKCLQDNNWDYTRSAQAFTHLKAKGEIPEVAFMK) is the TAP-C domain.

This sequence belongs to the NXF family. In terms of assembly, heterodimer (via NTF2 domain) with NXT1. The formation of NXF1-NXT1 heterodimers is required for the NXF1-mediated nuclear mRNA export. Forms a complex with RANBP2/NUP358, NXT1 and RANGAP1. Associates with the exon junction complex (EJC) and with the transcription/export (TREX) complex. Found in a mRNA complex with UPF3A and UPF3B. Found in a post-splicing complex with RBM8A, UPF1, UPF2, UPF3A, UPF3B and RNPS1. Interacts (via N-terminus) with DHX9 (via N-terminus); this interaction is direct and negatively regulates NXF1-mediated nuclear export of constitutive transport element (CTE)-containing cellular mRNAs. Interacts with ALYREF/THOC4. Interacts with FYTTD1/UIF. Interacts with EIF4A3. Interacts with NUPL2. Interacts with THOC5. Interacts with CHTOP. Interacts with FRG1 (via N-terminus). Interacts with LUZP4. Interacts with FMR1; the interaction occurs in a mRNA-dependent and polyribosomes-independent manner in the nucleus. Interacts with CPSF6 (via N-terminus); this interaction is direct. Interacts with RBM15. Interacts with RBM15B. Interacts with MCM3AP; this interaction is not mediated by RNA.

The protein resides in the nucleus. Its subcellular location is the nucleoplasm. It localises to the nucleus speckle. It is found in the cytoplasm. Functionally, involved in the nuclear export of mRNA species bearing retroviral constitutive transport elements (CTE) and in the export of mRNA from the nucleus to the cytoplasm (TAP/NFX1 pathway). The NXF1-NXT1 heterodimer is involved in the export of HSP70 mRNA in conjunction with ALYREF/THOC4 and THOC5 components of the TREX complex. ALYREF/THOC4-bound mRNA is thought to be transferred to the NXF1-NXT1 heterodimer for export. Also involved in nuclear export of m6A-containing mRNAs: interaction between SRSF3 and YTHDC1 facilitates m6A-containing mRNA-binding to both SRSF3 and NXF1, promoting mRNA nuclear export. The protein is Nuclear RNA export factor 1 (NXF1) of Pongo abelii (Sumatran orangutan).